We begin with the raw amino-acid sequence, 235 residues long: 2-C-methyl-D-erythritol 4-phosphate cytidylyltransferase (235 aa).

It belongs to the IspD/TarI cytidylyltransferase family. IspD subfamily.

The enzyme catalyses 2-C-methyl-D-erythritol 4-phosphate + CTP + H(+) = 4-CDP-2-C-methyl-D-erythritol + diphosphate. Its pathway is isoprenoid biosynthesis; isopentenyl diphosphate biosynthesis via DXP pathway; isopentenyl diphosphate from 1-deoxy-D-xylulose 5-phosphate: step 2/6. In terms of biological role, catalyzes the formation of 4-diphosphocytidyl-2-C-methyl-D-erythritol from CTP and 2-C-methyl-D-erythritol 4-phosphate (MEP). The protein is 2-C-methyl-D-erythritol 4-phosphate cytidylyltransferase of Leptospira borgpetersenii serovar Hardjo-bovis (strain L550).